A 59-amino-acid polypeptide reads, in one-letter code: Large ribosomal subunit protein bL33 (59 aa).

This sequence belongs to the bacterial ribosomal protein bL33 family.

The sequence is that of Large ribosomal subunit protein bL33 from Prosthecochloris aestuarii (strain DSM 271 / SK 413).